The sequence spans 331 residues: Biotin synthase (331 aa).

Residues 40-269 (YRVQLASLLS…HARVRLSAGR (230 aa)) form the Radical SAM core domain. [4Fe-4S] cluster contacts are provided by Cys55, Cys59, and Cys62. [2Fe-2S] cluster is bound by residues Cys100, Cys132, Cys192, and Arg264.

This sequence belongs to the radical SAM superfamily. Biotin synthase family. Homodimer. [4Fe-4S] cluster serves as cofactor. [2Fe-2S] cluster is required as a cofactor.

The enzyme catalyses (4R,5S)-dethiobiotin + (sulfur carrier)-SH + 2 reduced [2Fe-2S]-[ferredoxin] + 2 S-adenosyl-L-methionine = (sulfur carrier)-H + biotin + 2 5'-deoxyadenosine + 2 L-methionine + 2 oxidized [2Fe-2S]-[ferredoxin]. The protein operates within cofactor biosynthesis; biotin biosynthesis; biotin from 7,8-diaminononanoate: step 2/2. In terms of biological role, catalyzes the conversion of dethiobiotin (DTB) to biotin by the insertion of a sulfur atom into dethiobiotin via a radical-based mechanism. The protein is Biotin synthase of Synechococcus sp. (strain CC9605).